The following is a 434-amino-acid chain: Probable carboxypeptidase BDBG_01803 (434 aa).

An N-terminal signal peptide occupies residues 1 to 20 (MKLSHLAAALSAQLVAPVAA). Residues Asn-35, Asn-136, and Asn-150 are each glycosylated (N-linked (GlcNAc...) asparagine). Zn(2+) is bound at residue Asp-160. The active-site Proton acceptor is Glu-192. Glu-193 lines the Zn(2+) pocket. N-linked (GlcNAc...) asparagine glycosylation occurs at Asn-343.

This sequence belongs to the peptidase M20A family. The cofactor is Zn(2+).

It localises to the secreted. The sequence is that of Probable carboxypeptidase BDBG_01803 from Blastomyces gilchristii (strain SLH14081) (Blastomyces dermatitidis).